The following is a 1888-amino-acid chain: Nuclear pore membrane glycoprotein 210-like (1888 aa).

A signal peptide spans 1–35; it reads MTGCPASSRRRGFGLFFFLRLHRLLLLFLVLRGTL. 7 N-linked (GlcNAc...) asparagine glycosylation sites follow: Asn-84, Asn-304, Asn-348, Asn-495, Asn-522, Asn-812, and Asn-931. The BIG2 domain occupies 1082–1154; it reads FPPFRLLPEK…TIQTVNEDTG (73 aa). The N-linked (GlcNAc...) asparagine glycan is linked to Asn-1445. Residues 1813 to 1833 traverse the membrane as a helical segment; the sequence is ILLLTLFAVLASTASIFLAYN. A glycan (N-linked (GlcNAc...) asparagine) is linked at Asn-1859.

It belongs to the NUP210 family.

The protein localises to the nucleus membrane. The polypeptide is Nuclear pore membrane glycoprotein 210-like (NUP210L) (Homo sapiens (Human)).